A 108-amino-acid chain; its full sequence is Large ribosomal subunit protein uL24 (108 aa).

This sequence belongs to the universal ribosomal protein uL24 family. In terms of assembly, part of the 50S ribosomal subunit.

One of two assembly initiator proteins, it binds directly to the 5'-end of the 23S rRNA, where it nucleates assembly of the 50S subunit. Its function is as follows. One of the proteins that surrounds the polypeptide exit tunnel on the outside of the subunit. This chain is Large ribosomal subunit protein uL24, found in Geotalea daltonii (strain DSM 22248 / JCM 15807 / FRC-32) (Geobacter daltonii).